A 430-amino-acid chain; its full sequence is MPRKFLGNKIEKNVDAVRPSSLTLTADDLKYIPPIPQDFEDEDDKVLRTSNGGNRLSKRFGGTLKLKKRLESVPELFLHDFKKRPRSQLEVIREKKFTDMQVPKGPVCPQSTILPLRERKKVKSLPIQRKSLRRPTLSKPAVVQSLGHKTHSDHIIDKVFVSRPAPIVMPVKALTPINPVSLMQTQTQDCCRKNKYGKSGSEILFDEILSAYENVSTSDSTALNSEIDRIIDICASKQIAKKNEAFQVPYVVCPDDTETLFSSTTPKLKPVNSNTLNDVISSPEYTTSGCSTYSDQSNSDEELSEVESIVWNTNKRTMRSSIVSESTSEEGYCTAAETLPSTVSVEDLDIHNKLPKVAQTSSCNTLLNKLSIRKLKKVILDPPKIMHVMTFDDDSDDGDDNDDEDRALNILQKKIDCIEIASCSSSIYSE.

Serine 395 bears the Phosphoserine mark.

The protein localises to the bud neck. In terms of biological role, may be involved in the establishment of the daughter fate. In Saccharomyces cerevisiae (strain ATCC 204508 / S288c) (Baker's yeast), this protein is Protein DSE3 (DSE3).